The sequence spans 382 residues: Prolargin (382 aa).

The signal sequence occupies residues Met1–Gly20. Residues Gln19–Pro66 form a disordered region. Pro residues-rich tracts occupy residues Arg41–Asp50 and Asp57–Pro66. LRR repeat units lie at residues Arg95–Ile114, Thr115–Ile138, Arg139–Leu162, Glu163–Ile183, Ser184–Leu207, Ser208–Leu233, Arg234–Ile254, Glu255–Leu278, Thr279–Ile303, Ser304–Ile323, Glu324–Leu362, and Lys363–Ile382. N-linked (GlcNAc...) asparagine glycosylation is present at Asn124. N-linked (GlcNAc...) asparagine glycans are attached at residues Asn289, Asn320, and Asn327. The cysteines at positions 332 and 373 are disulfide-linked.

The protein belongs to the small leucine-rich proteoglycan (SLRP) family. SLRP class II subfamily. As to quaternary structure, binds the basement membrane heparan sulfate proteoglycan perlecan and triple helical collagens type I and type II. Glycosylated; contains heparan sulfate. In terms of tissue distribution, connective tissue.

It is found in the secreted. Its subcellular location is the extracellular space. It localises to the extracellular matrix. May anchor basement membranes to the underlying connective tissue. This Homo sapiens (Human) protein is Prolargin (PRELP).